The following is a 335-amino-acid chain: F420-dependent glucose-6-phosphate dehydrogenase (335 aa).

Position 40 (Asp-40) interacts with coenzyme F420-(gamma-Glu)n. His-41 functions as the Proton donor in the catalytic mechanism. Residues Thr-77 and 108–109 (TG) each bind coenzyme F420-(gamma-Glu)n. Glu-110 (proton acceptor) is an active-site residue. Residues Asn-113, 177–178 (GG), and 180–181 (VV) each bind coenzyme F420-(gamma-Glu)n. 4 residues coordinate substrate: Thr-195, Lys-198, Lys-259, and Arg-283.

This sequence belongs to the F420-dependent glucose-6-phosphate dehydrogenase family. As to quaternary structure, homodimer.

It catalyses the reaction oxidized coenzyme F420-(gamma-L-Glu)(n) + D-glucose 6-phosphate + H(+) = 6-phospho-D-glucono-1,5-lactone + reduced coenzyme F420-(gamma-L-Glu)(n). In terms of biological role, catalyzes the coenzyme F420-dependent oxidation of glucose 6-phosphate (G6P) to 6-phosphogluconolactone. The sequence is that of F420-dependent glucose-6-phosphate dehydrogenase from Segniliparus rotundus (strain ATCC BAA-972 / CDC 1076 / CIP 108378 / DSM 44985 / JCM 13578).